We begin with the raw amino-acid sequence, 132 residues long: Small ribosomal subunit protein uS8 (132 aa).

This sequence belongs to the universal ribosomal protein uS8 family. Part of the 30S ribosomal subunit. Contacts proteins S5 and S12.

Its function is as follows. One of the primary rRNA binding proteins, it binds directly to 16S rRNA central domain where it helps coordinate assembly of the platform of the 30S subunit. The polypeptide is Small ribosomal subunit protein uS8 (Micrococcus luteus (strain ATCC 4698 / DSM 20030 / JCM 1464 / CCM 169 / CCUG 5858 / IAM 1056 / NBRC 3333 / NCIMB 9278 / NCTC 2665 / VKM Ac-2230) (Micrococcus lysodeikticus)).